Consider the following 358-residue polypeptide: Alanine racemase (358 aa).

Residue lysine 35 is the Proton acceptor; specific for D-alanine of the active site. The residue at position 35 (lysine 35) is an N6-(pyridoxal phosphate)lysine. Arginine 130 contacts substrate. Tyrosine 255 acts as the Proton acceptor; specific for L-alanine in catalysis. Position 303 (methionine 303) interacts with substrate.

It belongs to the alanine racemase family. Pyridoxal 5'-phosphate is required as a cofactor.

It catalyses the reaction L-alanine = D-alanine. It participates in amino-acid biosynthesis; D-alanine biosynthesis; D-alanine from L-alanine: step 1/1. Its function is as follows. Catalyzes the interconversion of L-alanine and D-alanine. May also act on other amino acids. In Shewanella baltica (strain OS155 / ATCC BAA-1091), this protein is Alanine racemase (alr).